The primary structure comprises 405 residues: mRNA cap guanine-N(7) methyltransferase (405 aa).

Residues 1 to 78 are disordered; the sequence is MDNILNPEDN…PRLEEGHGSL (78 aa). Polar residues-rich tracts occupy residues 9–18 and 36–45; these read DNVSQTNTET and KFTASGQNLD. Residues 58-75 are compositionally biased toward basic and acidic residues; sequence KAGEPESPSKRPRLEEGH. One can recognise an mRNA cap 0 methyltransferase domain in the interval 97–404; that stretch reads SRIFHLRNFN…IYLLFAFEKQ (308 aa). An mRNA-binding site is contributed by 106–107; it reads NN. The S-adenosyl-L-methionine site is built by Lys110, Gly134, Asp156, Asp190, Gln213, and Tyr218.

Belongs to the class I-like SAM-binding methyltransferase superfamily. mRNA cap 0 methyltransferase family.

It is found in the nucleus. It carries out the reaction a 5'-end (5'-triphosphoguanosine)-ribonucleoside in mRNA + S-adenosyl-L-methionine = a 5'-end (N(7)-methyl 5'-triphosphoguanosine)-ribonucleoside in mRNA + S-adenosyl-L-homocysteine. Functionally, catalytic subunit of the mRNA-capping methyltransferase RNMT:RAMAC complex that methylates the N7 position of the added guanosine to the 5'-cap structure of mRNAs. Binds RNA containing 5'-terminal GpppC. This Xenopus tropicalis (Western clawed frog) protein is mRNA cap guanine-N(7) methyltransferase (rnmt).